We begin with the raw amino-acid sequence, 350 residues long: UDP-N-acetylenolpyruvoylglucosamine reductase (350 aa).

The FAD-binding PCMH-type domain occupies 24–195 (HVEATARWLL…VAVEFNLPLL (172 aa)). R172 is a catalytic residue. S245 serves as the catalytic Proton donor. Residue E342 is part of the active site.

It belongs to the MurB family. Requires FAD as cofactor.

The protein resides in the cytoplasm. It catalyses the reaction UDP-N-acetyl-alpha-D-muramate + NADP(+) = UDP-N-acetyl-3-O-(1-carboxyvinyl)-alpha-D-glucosamine + NADPH + H(+). The protein operates within cell wall biogenesis; peptidoglycan biosynthesis. Its function is as follows. Cell wall formation. In Xanthomonas axonopodis pv. citri (strain 306), this protein is UDP-N-acetylenolpyruvoylglucosamine reductase.